A 790-amino-acid polypeptide reads, in one-letter code: Cadherin-18 (790 aa).

The signal sequence occupies residues Met1–Gly24. Positions Thr25–Arg53 are excised as a propeptide. Asn36 carries an N-linked (GlcNAc...) asparagine glycan. Cadherin domains follow at residues Gly54–Phe159, Thr160–Phe268, Pro269–Phe383, Ser384–Pro486, and Glu487–Ser608. The Extracellular portion of the chain corresponds to Gly54 to Ser608. An N-linked (GlcNAc...) asparagine glycan is attached at Asn255. N-linked (GlcNAc...) asparagine glycosylation is found at Asn455 and Asn536. A helical membrane pass occupies residues Ala609–Leu636. The Cytoplasmic portion of the chain corresponds to Arg637–Thr790. Position 786 is a phosphoserine (Ser786).

It is found in the cell membrane. Cadherins are calcium-dependent cell adhesion proteins. They preferentially interact with themselves in a homophilic manner in connecting cells; cadherins may thus contribute to the sorting of heterogeneous cell types. This Homo sapiens (Human) protein is Cadherin-18 (CDH18).